Consider the following 288-residue polypeptide: MAGEQTTTEYISHHLTNWTYGYLPGEGWKVAYTAEEASAMGFKAIHLDSMLWSIGLGIVFCAIFWMVARKVTSGVPGKLQAAVEMIIEFVDNNVRDSYSGTSKLIAPLALTIFVWIFLMNLMDLLPVDFVPGLAGQIGAMMGHDPHHVFFKIVPTTDPNITLGMSFSVFILILFYSIKEKGLGGFVGELTLHPFSAKNPIVQIILIPINFILEFVTLIAKPISLGLRLFGNMYAGELIFILIALMPFWIQWALSVPWAIFHILIITLQAFVFMMLTIVYMSLASSTEH.

Transmembrane regions (helical) follow at residues 47 to 67 (LDSM…FWMV), 104 to 124 (LIAP…LMDL), 157 to 177 (DPNI…FYSI), 199 to 219 (PIVQ…TLIA), 237 to 257 (LIFI…SVPW), and 258 to 278 (AIFH…LTIV).

This sequence belongs to the ATPase A chain family. F-type ATPases have 2 components, CF(1) - the catalytic core - and CF(0) - the membrane proton channel. CF(1) has five subunits: alpha(3), beta(3), gamma(1), delta(1), epsilon(1). CF(0) has three main subunits: a(1), b(2) and c(9-12). The alpha and beta chains form an alternating ring which encloses part of the gamma chain. CF(1) is attached to CF(0) by a central stalk formed by the gamma and epsilon chains, while a peripheral stalk is formed by the delta and b chains.

The protein localises to the cell inner membrane. Key component of the proton channel; it plays a direct role in the translocation of protons across the membrane. This chain is ATP synthase subunit a, found in Psychrobacter arcticus (strain DSM 17307 / VKM B-2377 / 273-4).